Reading from the N-terminus, the 389-residue chain is tRNA-specific 2-thiouridylase MnmA (389 aa).

ATP is bound by residues 35 to 42 (GMSGGVDS) and Met-61. The interaction with target base in tRNA stretch occupies residues 121–123 (NPD). The active-site Nucleophile is the Cys-126. A disulfide bridge links Cys-126 with Cys-223. Gly-151 contributes to the ATP binding site. The segment at 173-175 (KDQ) is interaction with tRNA. Cys-223 (cysteine persulfide intermediate) is an active-site residue. Residues 335-336 (RY) form an interaction with tRNA region.

Belongs to the MnmA/TRMU family.

The protein localises to the cytoplasm. It catalyses the reaction S-sulfanyl-L-cysteinyl-[protein] + uridine(34) in tRNA + AH2 + ATP = 2-thiouridine(34) in tRNA + L-cysteinyl-[protein] + A + AMP + diphosphate + H(+). Its function is as follows. Catalyzes the 2-thiolation of uridine at the wobble position (U34) of tRNA, leading to the formation of s(2)U34. The sequence is that of tRNA-specific 2-thiouridylase MnmA from Actinobacillus pleuropneumoniae serotype 3 (strain JL03).